The sequence spans 212 residues: Ribosomal RNA large subunit methyltransferase E (212 aa).

S-adenosyl-L-methionine-binding residues include G56, W58, D78, D94, and D117. Residue K157 is the Proton acceptor of the active site.

This sequence belongs to the class I-like SAM-binding methyltransferase superfamily. RNA methyltransferase RlmE family.

The protein resides in the cytoplasm. The enzyme catalyses uridine(2552) in 23S rRNA + S-adenosyl-L-methionine = 2'-O-methyluridine(2552) in 23S rRNA + S-adenosyl-L-homocysteine + H(+). Its function is as follows. Specifically methylates the uridine in position 2552 of 23S rRNA at the 2'-O position of the ribose in the fully assembled 50S ribosomal subunit. This is Ribosomal RNA large subunit methyltransferase E from Ehrlichia chaffeensis (strain ATCC CRL-10679 / Arkansas).